A 477-amino-acid chain; its full sequence is Inner membrane protein YbhI (477 aa).

Residues 1-5 (MNKKS) lie on the Cytoplasmic side of the membrane. The helical transmembrane segment at 6–26 (LWKLILILAIPCIIGFMPAPA) threads the bilayer. Residue G27 is a topological domain, periplasmic. The helical transmembrane segment at 28-48 (LSELAWVLFGIYLAAIVGLVI) threads the bilayer. Topologically, residues 49 to 50 (KP) are cytoplasmic. A helical membrane pass occupies residues 51–71 (FPEPVVLLIAVAASMVVVGNL). At 72 to 87 (SDGAFKTTAVLSGYSS) the chain is on the periplasmic side. Residues 88-108 (GTTWLVFSAFTLSAAFVTTGL) traverse the membrane as a helical segment. Over 109-148 (GKRIAYLLIGKIGNTTLGLGYVTVFLDLVLAPATPSNTAR) the chain is Cytoplasmic. A helical membrane pass occupies residues 149 to 169 (AGGIVLPIINSVAVALGSEPE). The Periplasmic portion of the chain corresponds to 170 to 219 (KSPRRVGHYLMMSIYMVTKTTSYMFFTAMAGNILALKMINDILHLQISWG). The helical transmembrane segment at 220-240 (GWALAAGLPGIIMLLVTPLVI) threads the bilayer. Over 241–272 (YTMYPPEIKKVDNKTIAKAGLAELGPMKIREK) the chain is Cytoplasmic. The chain crosses the membrane as a helical span at residues 273–293 (MLLGVFVLALLGWIFSKSLGV). The Periplasmic portion of the chain corresponds to 294–297 (DEST). The chain crosses the membrane as a helical span at residues 298 to 318 (VAIVVMATMLLLGIVTWEDVV). The Cytoplasmic portion of the chain corresponds to 319-356 (KNKGGWNTLIWYGGIIGLSSLLSKVKFFEWLAEVFKNN). A helical membrane pass occupies residues 357–377 (LAFDGHGNVAFFVIIFLSIIV). Residue R378 is a topological domain, periplasmic. A helical membrane pass occupies residues 379–399 (YFFASGSAYIVAMLPVFAMLA). The Cytoplasmic segment spans residues 400-445 (NVSGAPLMLTALALLFSNSYGGMVTHYGGAAGPVIFGVGYNDIKSW). The chain crosses the membrane as a helical span at residues 446–466 (WLVGAVLTILTFLVHITLGVW). Residues 467-477 (WWNMLIGWNML) are Periplasmic-facing.

The protein belongs to the SLC13A/DASS transporter (TC 2.A.47) family. DIT1 subfamily.

The protein resides in the cell inner membrane. The sequence is that of Inner membrane protein YbhI (ybhI) from Escherichia coli (strain K12).